A 684-amino-acid polypeptide reads, in one-letter code: uncharacterized protein (684 aa).

2 disordered regions span residues 267–353 and 388–449; these read MGAR…TCTD and SVAS…AERE. Polar residues predominate over residues 316-326; it reads GMTSAKASTSY. The segment covering 438–449 has biased composition (basic and acidic residues); that stretch reads RPTEARRRAERE.

This is an uncharacterized protein from Colorado tick fever virus (strain USA/Florio N-7180) (CTFV).